A 345-amino-acid chain; its full sequence is Tubulin-folding cofactor C (345 aa).

Position 1 is an N-acetylmethionine (M1). The segment covering 1–10 (MEDDGQSSVA) has biased composition (polar residues). Residues 1-83 (MEDDGQSSVA…SRLASSSTDS (83 aa)) are disordered. Positions 23–39 (DMLERLSARHQARKSDS) are enriched in basic and acidic residues. The segment covering 40–55 (PDSSSSSSSTLESTSS) has biased composition (low complexity). Residues 61–73 (SDSKRSIESRIAE) show a composition bias toward basic and acidic residues. Over residues 74–83 (SRLASSSTDS) the composition is skewed to low complexity. The C-CAP/cofactor C-like domain maps to 169–318 (PPKLVPVRDS…NWANVDDFRW (150 aa)).

It belongs to the TBCC family. Supercomplex made of cofactors A to E. Cofactors A and D function by capturing and stabilizing tubulin in a quasi-native conformation. Cofactor E binds to the cofactor D-tubulin complex; interaction with cofactor C then causes the release of tubulin polypeptides that are committed to the native state. Ubiquitously expressed (at protein level). Present in leaves, roots, flowers, and stems.

It is found in the cytoplasm. Its function is as follows. Essential tubulin-folding protein involved in the final step of the tubulin folding pathway. Required for continuous microtubule cytoskeleton organization, mitotic division, cytokinesis, and to couple cell cycle progression to cell division in embryos and endosperms. Not essential for cell viability. Binds probably to the multimeric supercomplex, stimulating GTP hydrolysis by the bound beta-tubulin and the release of the alpha-/beta-tubulin heterodimer. The protein is Tubulin-folding cofactor C (TFCC) of Arabidopsis thaliana (Mouse-ear cress).